A 356-amino-acid polypeptide reads, in one-letter code: Tyrosine recombinase XerS (356 aa).

In terms of domain architecture, Core-binding (CB) spans 16-121 (TMPWYILEYY…ALSSLYKYLT (106 aa)). The region spanning 169-354 (EFLQYIDTEY…VNDEQKNALD (186 aa)) is the Tyr recombinase domain. Active-site residues include Arg210, Lys234, His306, Arg309, and His332. The active-site O-(3'-phospho-DNA)-tyrosine intermediate is Tyr341.

This sequence belongs to the 'phage' integrase family. XerS subfamily.

The protein resides in the cytoplasm. FtsK is required for recombination. In terms of biological role, site-specific tyrosine recombinase, which acts by catalyzing the cutting and rejoining of the recombining DNA molecules. Essential to convert dimers of the bacterial chromosome into monomers to permit their segregation at cell division. The chain is Tyrosine recombinase XerS from Streptococcus sanguinis (strain SK36).